Consider the following 336-residue polypeptide: NADH-quinone oxidoreductase subunit H (336 aa).

A run of 8 helical transmembrane segments spans residues 17 to 37 (WFII…TYAI), 85 to 105 (ALFT…LAVM), 116 to 136 (LGIG…GVIT), 154 to 174 (AAQM…IVLL), 190 to 210 (VWNI…AQAE), 247 to 267 (VYMF…WLPI), 274 to 294 (IPGI…QFWI), and 309 to 329 (FAWK…AVVV).

Belongs to the complex I subunit 1 family. NDH-1 is composed of 14 different subunits. Subunits NuoA, H, J, K, L, M, N constitute the membrane sector of the complex.

The protein localises to the cell membrane. It catalyses the reaction a quinone + NADH + 5 H(+)(in) = a quinol + NAD(+) + 4 H(+)(out). Its function is as follows. NDH-1 shuttles electrons from NADH, via FMN and iron-sulfur (Fe-S) centers, to quinones in the respiratory chain. The immediate electron acceptor for the enzyme in this species is believed to be ubiquinone. Couples the redox reaction to proton translocation (for every two electrons transferred, four hydrogen ions are translocated across the cytoplasmic membrane), and thus conserves the redox energy in a proton gradient. This subunit may bind ubiquinone. This chain is NADH-quinone oxidoreductase subunit H, found in Brevibacillus brevis (strain 47 / JCM 6285 / NBRC 100599).